A 122-amino-acid chain; its full sequence is Large ribosomal subunit protein bL12 (122 aa).

This sequence belongs to the bacterial ribosomal protein bL12 family. Homodimer. Part of the ribosomal stalk of the 50S ribosomal subunit. Forms a multimeric L10(L12)X complex, where L10 forms an elongated spine to which 2 to 4 L12 dimers bind in a sequential fashion. Binds GTP-bound translation factors.

In terms of biological role, forms part of the ribosomal stalk which helps the ribosome interact with GTP-bound translation factors. Is thus essential for accurate translation. In Deinococcus geothermalis (strain DSM 11300 / CIP 105573 / AG-3a), this protein is Large ribosomal subunit protein bL12.